Reading from the N-terminus, the 470-residue chain is Cyclin-B1-3 (470 aa).

This sequence belongs to the cyclin family. Cyclin AB subfamily.

The polypeptide is Cyclin-B1-3 (CYCB1-3) (Oryza sativa subsp. japonica (Rice)).